Consider the following 117-residue polypeptide: G antigen 12B/C/D/E (117 aa).

Residues 1-117 (MSWRGRSTYY…PEEGEKQSQC (117 aa)) form a disordered region. 2 stretches are compositionally biased toward acidic residues: residues 32–45 (FSDE…EEGE) and 87–96 (ECEDGPDGQE). Residues 103–117 (EEVKTPEEGEKQSQC) are compositionally biased toward basic and acidic residues.

Belongs to the GAGE family.

This is G antigen 12B/C/D/E (GAGE12B) from Homo sapiens (Human).